The chain runs to 90 residues: Acylphosphatase (90 aa).

The Acylphosphatase-like domain maps to 4–90 (RWRFLIEGSV…TGNDWFDVRT (87 aa)). Catalysis depends on residues Arg-19 and Asn-37.

It belongs to the acylphosphatase family.

It catalyses the reaction an acyl phosphate + H2O = a carboxylate + phosphate + H(+). The polypeptide is Acylphosphatase (acyP) (Synechococcus sp. (strain CC9311)).